A 202-amino-acid polypeptide reads, in one-letter code: Peptidyl-tRNA hydrolase (202 aa).

Tyrosine 14 lines the tRNA pocket. Histidine 19 acts as the Proton acceptor in catalysis. Residues tyrosine 64, asparagine 66, and asparagine 112 each coordinate tRNA.

This sequence belongs to the PTH family. As to quaternary structure, monomer.

It is found in the cytoplasm. The enzyme catalyses an N-acyl-L-alpha-aminoacyl-tRNA + H2O = an N-acyl-L-amino acid + a tRNA + H(+). Its function is as follows. Hydrolyzes ribosome-free peptidyl-tRNAs (with 1 or more amino acids incorporated), which drop off the ribosome during protein synthesis, or as a result of ribosome stalling. Catalyzes the release of premature peptidyl moieties from peptidyl-tRNA molecules trapped in stalled 50S ribosomal subunits, and thus maintains levels of free tRNAs and 50S ribosomes. This is Peptidyl-tRNA hydrolase from Nitrobacter winogradskyi (strain ATCC 25391 / DSM 10237 / CIP 104748 / NCIMB 11846 / Nb-255).